The sequence spans 767 residues: 5-methyltetrahydropteroyltriglutamate--homocysteine methyltransferase (767 aa).

Residues 16–19 (RELK) and K122 each bind 5-methyltetrahydropteroyltri-L-glutamate. L-homocysteine-binding positions include 443–445 (IGS) and E496. L-methionine-binding positions include 443-445 (IGS) and E496. 5-methyltetrahydropteroyltri-L-glutamate-binding positions include 527-528 (RC) and W573. D611 serves as a coordination point for L-homocysteine. D611 contacts L-methionine. E617 contacts 5-methyltetrahydropteroyltri-L-glutamate. Positions 653, 655, and 677 each coordinate Zn(2+). H706 acts as the Proton donor in catalysis. C738 is a binding site for Zn(2+).

It belongs to the vitamin-B12 independent methionine synthase family. The cofactor is Zn(2+).

It catalyses the reaction 5-methyltetrahydropteroyltri-L-glutamate + L-homocysteine = tetrahydropteroyltri-L-glutamate + L-methionine. The protein operates within amino-acid biosynthesis; L-methionine biosynthesis via de novo pathway; L-methionine from L-homocysteine (MetE route): step 1/1. Functionally, catalyzes the transfer of a methyl group from 5-methyltetrahydrofolate to homocysteine resulting in methionine formation. The protein is 5-methyltetrahydropteroyltriglutamate--homocysteine methyltransferase of Ectopseudomonas mendocina (strain ymp) (Pseudomonas mendocina).